The sequence spans 301 residues: Homoserine kinase (301 aa).

81–91 (RPSSGLGSSAA) lines the ATP pocket.

It belongs to the GHMP kinase family. Homoserine kinase subfamily.

The protein resides in the cytoplasm. The enzyme catalyses L-homoserine + ATP = O-phospho-L-homoserine + ADP + H(+). Its pathway is amino-acid biosynthesis; L-threonine biosynthesis; L-threonine from L-aspartate: step 4/5. In terms of biological role, catalyzes the ATP-dependent phosphorylation of L-homoserine to L-homoserine phosphate. This is Homoserine kinase from Halobacterium salinarum (strain ATCC 29341 / DSM 671 / R1).